A 176-amino-acid chain; its full sequence is Ribosome maturation factor RimM (176 aa).

Positions 97 to 176 (EDEFYWRDLI…QILVDWDPDF (80 aa)) constitute a PRC barrel domain.

The protein belongs to the RimM family. As to quaternary structure, binds ribosomal protein uS19.

It localises to the cytoplasm. An accessory protein needed during the final step in the assembly of 30S ribosomal subunit, possibly for assembly of the head region. Essential for efficient processing of 16S rRNA. May be needed both before and after RbfA during the maturation of 16S rRNA. It has affinity for free ribosomal 30S subunits but not for 70S ribosomes. This Shewanella loihica (strain ATCC BAA-1088 / PV-4) protein is Ribosome maturation factor RimM.